We begin with the raw amino-acid sequence, 581 residues long: NADH-quinone oxidoreductase subunit C/D (581 aa).

Residues 1-172 are NADH dehydrogenase I subunit C; that stretch reads MSGAELISDL…PPFVMTAARF (172 aa). Positions 196–581 are NADH dehydrogenase I subunit D; sequence ELMILNYGPH…IDYVMSDVDR (386 aa).

It in the N-terminal section; belongs to the complex I 30 kDa subunit family. This sequence in the C-terminal section; belongs to the complex I 49 kDa subunit family. As to quaternary structure, NDH-1 is composed of 13 different subunits. Subunits NuoB, CD, E, F, and G constitute the peripheral sector of the complex.

It localises to the cell inner membrane. The catalysed reaction is a quinone + NADH + 5 H(+)(in) = a quinol + NAD(+) + 4 H(+)(out). In terms of biological role, NDH-1 shuttles electrons from NADH, via FMN and iron-sulfur (Fe-S) centers, to quinones in the respiratory chain. The immediate electron acceptor for the enzyme in this species is believed to be ubiquinone. Couples the redox reaction to proton translocation (for every two electrons transferred, four hydrogen ions are translocated across the cytoplasmic membrane), and thus conserves the redox energy in a proton gradient. This chain is NADH-quinone oxidoreductase subunit C/D, found in Rhodopseudomonas palustris (strain BisA53).